A 295-amino-acid polypeptide reads, in one-letter code: Mycothiol acetyltransferase (295 aa).

A 1D-myo-inositol 2-(L-cysteinylamino)-2-deoxy-alpha-D-glucopyranoside-binding site is contributed by Glu-30. Residue Leu-62–Val-64 participates in acetyl-CoA binding. Positions Val-137–Arg-295 constitute an N-acetyltransferase domain. 1D-myo-inositol 2-(L-cysteinylamino)-2-deoxy-alpha-D-glucopyranoside is bound by residues Glu-165, Lys-209, and Glu-227. Residues Val-231 to Ile-233 and Gln-238 to Lys-244 each bind acetyl-CoA. Tyr-265 serves as a coordination point for 1D-myo-inositol 2-(L-cysteinylamino)-2-deoxy-alpha-D-glucopyranoside.

Belongs to the acetyltransferase family. MshD subfamily. In terms of assembly, monomer.

The enzyme catalyses 1D-myo-inositol 2-(L-cysteinylamino)-2-deoxy-alpha-D-glucopyranoside + acetyl-CoA = mycothiol + CoA + H(+). Its function is as follows. Catalyzes the transfer of acetyl from acetyl-CoA to desacetylmycothiol (Cys-GlcN-Ins) to form mycothiol. The chain is Mycothiol acetyltransferase from Nocardioides sp. (strain ATCC BAA-499 / JS614).